The primary structure comprises 1271 residues: SR-related and CTD-associated factor 8 (1271 aa).

One can recognise a CID domain in the interval 1–139 (MEAVKTFNSE…PLLDMAAGIP (139 aa)). Thr-6 carries the post-translational modification Phosphothreonine. Residue Lys-18 forms a Glycyl lysine isopeptide (Lys-Gly) (interchain with G-Cter in SUMO1) linkage. A compositionally biased stretch (basic and acidic residues) spans 270–283 (GEDSEHSEEPKKEI). Disordered regions lie at residues 270–289 (GEDS…SQLS), 322–354 (QQQP…SQQH), and 384–468 (EEVF…PPIR). Residue Ser-273 is modified to Phosphoserine. Residues 327–354 (KATPQDSQEGTFGSEHSASPSQGSSQQH) show a composition bias toward polar residues. Residues 394-443 (VAVRSRSRTHSRSRSRSPRKRRSRSRSGSRKRKHRKRSRSRSRERKRKSS) show a composition bias toward basic residues. The span at 447–461 (SSERRAREREKERQK) shows a compositional bias: basic and acidic residues. An RRM domain is found at 477-551 (TTLWVGQVDK…KVIKIAWALN (75 aa)). Thr-615 bears the Phosphothreonine mark. Phosphoserine occurs at positions 617 and 779. The segment at 899–918 (TQPPAGPQNLPPLSIPNQRM) is disordered. Pro residues predominate over residues 902-912 (PAGPQNLPPLS). 3 positions are modified to asymmetric dimethylarginine: Arg-917, Arg-927, and Arg-938. Composition is skewed to pro residues over residues 945-956 (GIPPQRGIPPPS) and 963-972 (HPPPRGPFPP). A disordered region spans residues 945–1064 (GIPPQRGIPP…DGRDHFGRPP (120 aa)). Basic and acidic residues-rich tracts occupy residues 1011–1027 (EGDR…RESI) and 1034–1064 (DVRD…GRPP). At Arg-1073 the chain carries Asymmetric dimethylarginine. Residues 1198 to 1271 (YFEGATSQRK…VVESTETEGT (74 aa)) form a disordered region. Positions 1255-1271 (ADIESEPVVESTETEGT) are enriched in acidic residues.

Interacts with POLR2A; via C-terminal heptapeptide repeat domain (CTD) phosphorylated at 'Ser-2' and 'Ser-5'. Identified in a complex with CDC5L and other spliceosomal proteins.

It localises to the nucleus. The protein localises to the nucleus matrix. Functionally, anti-terminator protein required to prevent early mRNA termination during transcription. Together with SCAF4, acts by suppressing the use of early, alternative poly(A) sites, thereby preventing the accumulation of non-functional truncated proteins. Mechanistically, associates with the phosphorylated C-terminal heptapeptide repeat domain (CTD) of the largest RNA polymerase II subunit (POLR2A), and subsequently binds nascent RNA upstream of early polyadenylation sites to prevent premature mRNA transcript cleavage and polyadenylation. Independently of SCAF4, also acts as a positive regulator of transcript elongation. This Homo sapiens (Human) protein is SR-related and CTD-associated factor 8.